Here is a 398-residue protein sequence, read N- to C-terminus: Phosphoglycerate kinase (398 aa).

Residues 21 to 23, arginine 41, 64 to 67, arginine 123, and arginine 156 each bind substrate; these read DFN and HLGR. ATP contacts are provided by residues lysine 207, glycine 294, glutamate 325, and 354-357; that span reads GGDS.

The protein belongs to the phosphoglycerate kinase family. As to quaternary structure, monomer.

Its subcellular location is the cytoplasm. The catalysed reaction is (2R)-3-phosphoglycerate + ATP = (2R)-3-phospho-glyceroyl phosphate + ADP. It functions in the pathway carbohydrate degradation; glycolysis; pyruvate from D-glyceraldehyde 3-phosphate: step 2/5. The chain is Phosphoglycerate kinase from Salinibacter ruber (strain DSM 13855 / M31).